A 512-amino-acid chain; its full sequence is Matrix metalloproteinase-27 (512 aa).

Positions 1-17 (MKSFLLLFLLFVTFSSA) are cleaved as a signal peptide. Positions 18 to 98 (LPADQKMENE…PRCGVPDVGQ (81 aa)) are cleaved as a propeptide — activation peptide. The Cysteine switch motif lies at 89–96 (PRCGVPDV). Position 91 (Cys-91) interacts with Zn(2+). Asn-110 carries N-linked (GlcNAc...) asparagine glycosylation. Ca(2+) is bound by residues Asp-121 and Asp-155. His-165 provides a ligand contact to Zn(2+). 3 residues coordinate Ca(2+): Asp-173, Gly-174, and Val-178. His-181 contacts Zn(2+). Ca(2+) contacts are provided by Gly-188 and Asp-192. A Zn(2+)-binding site is contributed by His-194. Residues Asp-196 and Glu-199 each contribute to the Ca(2+) site. His-216 contacts Zn(2+). Residue Glu-217 is part of the active site. Positions 220 and 226 each coordinate Zn(2+). Hemopexin repeat units follow at residues 276–325 (PHAC…WPSL), 326–371 (PADL…GFPR), 373–421 (VKKI…FPGI), and 422–465 (GLRV…WFQC). A disulfide bridge connects residues Cys-279 and Cys-465. Asp-286 serves as a coordination point for Ca(2+). Asp-377 and Asp-426 together coordinate Ca(2+). The segment at 466 to 512 (KEPLNSSLDFHFNQEKAYSGEVETLHHQSLSLLIFGIVHLLNKICSY) is required for retention in the endoplasmic reticulum.

The protein belongs to the peptidase M10A family. It depends on Ca(2+) as a cofactor. Requires Zn(2+) as cofactor. Post-translationally, N-glycosylated.

It localises to the endoplasmic reticulum. Functionally, matrix metalloproteinases degrade protein components of the extracellular matrix such as fibronectin, laminin, gelatins and/or collagens. The sequence is that of Matrix metalloproteinase-27 (MMP27) from Tupaia belangeri (Common tree shrew).